Here is an 80-residue protein sequence, read N- to C-terminus: Bowman-Birk type proteinase inhibitor DE-4 (80 aa).

Residues 1 to 10 show a composition bias toward acidic residues; it reads DDDHSDDEPR. The tract at residues 1–29 is disordered; that stretch reads DDDHSDDEPRESESSKPCCSSCCTRSRPP. The span at 15–29 shows a compositional bias: low complexity; sequence SKPCCSSCCTRSRPP. Disulfide bonds link Cys-18–Cys-71, Cys-19–Cys-33, Cys-22–Cys-67, Cys-23–Cys-31, Cys-41–Cys-48, Cys-45–Cys-60, and Cys-50–Cys-58.

Belongs to the Bowman-Birk serine protease inhibitor family.

This is Bowman-Birk type proteinase inhibitor DE-4 from Philenoptera violacea (Apple-leaf).